The sequence spans 270 residues: Bis(5'-nucleosyl)-tetraphosphatase, symmetrical (270 aa).

It belongs to the Ap4A hydrolase family.

The enzyme catalyses P(1),P(4)-bis(5'-adenosyl) tetraphosphate + H2O = 2 ADP + 2 H(+). Hydrolyzes diadenosine 5',5'''-P1,P4-tetraphosphate to yield ADP. The chain is Bis(5'-nucleosyl)-tetraphosphatase, symmetrical from Thioalkalivibrio sulfidiphilus (strain HL-EbGR7).